A 193-amino-acid polypeptide reads, in one-letter code: MTELALILVSTVLVNNFVLVKFLGLCPFMGVSRQLETAMGMALATTFVLTLSAVCSYLAYEYLLAPLGVEYLRTITFIMVIAVVVQFTEMAVRKTSPLLHQVLGIYLPLITTNCAVLGVALLNLQEQNSLLQSAVYGFGAAAGFSLVLVLFAALRERLEVADVPLPFRGASVALVTAGILSMGFMGFAGLVRL.

A run of 6 helical transmembrane segments spans residues 4 to 24 (LALILVSTVLVNNFVLVKFLG), 38 to 58 (AMGMALATTFVLTLSAVCSYL), 65 to 85 (APLGVEYLRTITFIMVIAVVV), 102 to 122 (VLGIYLPLITTNCAVLGVALL), 134 to 154 (AVYGFGAAAGFSLVLVLFAAL), and 171 to 191 (SVALVTAGILSMGFMGFAGLV).

It belongs to the NqrDE/RnfAE family. The complex is composed of six subunits: RnfA, RnfB, RnfC, RnfD, RnfE and RnfG.

The protein resides in the cell inner membrane. Its function is as follows. Part of a membrane-bound complex that couples electron transfer with translocation of ions across the membrane. The protein is Ion-translocating oxidoreductase complex subunit A of Alkalilimnicola ehrlichii (strain ATCC BAA-1101 / DSM 17681 / MLHE-1).